Reading from the N-terminus, the 188-residue chain is CASP-like protein 4B3 (188 aa).

A disordered region spans residues 1–21; that stretch reads MSFSPASSEPHDAPAAAGSSV. Topologically, residues 1-42 are cytoplasmic; that stretch reads MSFSPASSEPHDAPAAAGSSVPASRSIAERWKMEAAPIRARL. Residues 43-63 traverse the membrane as a helical segment; the sequence is LLRAFAWLFSLLALVVMATDV. Topologically, residues 64 to 76 are extracellular; the sequence is HGRGGAQDFSTYP. The helical transmembrane segment at 77–97 threads the bilayer; it reads EYNYCLGMSIIALLYATAQLV. Topologically, residues 98 to 114 are cytoplasmic; that stretch reads RDAHRLSSGRDLVAGRK. A helical transmembrane segment spans residues 115–135; it reads AAAVVDFAGDQVVAYSLISGL. Residues 136-156 are Extracellular-facing; sequence SAAAPVTDYMRQATDNLFNDS. Asparagine 154 carries N-linked (GlcNAc...) asparagine glycosylation. Residues 157 to 177 form a helical membrane-spanning segment; it reads AAAAISLAFFAFLAISLSALI. Topologically, residues 178–188 are cytoplasmic; that stretch reads SGYNLSLEAIV.

This sequence belongs to the Casparian strip membrane proteins (CASP) family. As to quaternary structure, homodimer and heterodimers.

It localises to the cell membrane. The polypeptide is CASP-like protein 4B3 (Hordeum vulgare subsp. vulgare (Domesticated barley)).